A 1293-amino-acid chain; its full sequence is Cilia- and flagella-associated protein 57 A (1293 aa).

The WD 1 repeat unit spans residues 72-113; sequence PGTKGITCMTLSPSKRLLAWSEDCDSGIIVVFDLIKLDKLEK. The segment at 117–143 is disordered; the sequence is QNYQEPSDKDKLDKQAEKDRRDRFEKE. The span at 122 to 143 shows a compositional bias: basic and acidic residues; it reads PSDKDKLDKQAEKDRRDRFEKE. WD repeat units follow at residues 309 to 348, 359 to 398, 411 to 450, 535 to 574, and 700 to 739; these read PKNE…KNPY, DMKA…MQLN, FHSD…LENS, RGSG…PQKT, and SHFG…YQVK. 3 coiled-coil regions span residues 756–1016, 1045–1079, and 1209–1285; these read RDQY…REKT, IKEL…FKRT, and INHL…QIQN.

Belongs to the CFAP57 family. In terms of assembly, forms a heterodimer with CFAP57C. Associates with components of the nexin-dynein regulatory complex (N-DRC) and the CFAP184:CFAP263 complex.

It is found in the cell projection. The protein localises to the cilium. Functionally, associates with components of the nexin-dynein regulatory complex (N-DRC), a key regulator of ciliary/flagellar motility, and might act as an inner dynein arm (IDA) hub or linkage. This chain is Cilia- and flagella-associated protein 57 A (CFAP57A), found in Tetrahymena thermophila (strain SB210).